The chain runs to 609 residues: UvrABC system protein C (609 aa).

Residues 13–91 (HQPGVYRMFD…IKAFQPRYNV (79 aa)) form the GIY-YIG domain. The UVR domain occupies 201–236 (QQVLEHLIKKMEQASMQLNFEQAAYFRDQIQAIRAV).

Belongs to the UvrC family. Interacts with UvrB in an incision complex.

The protein localises to the cytoplasm. Its function is as follows. The UvrABC repair system catalyzes the recognition and processing of DNA lesions. UvrC both incises the 5' and 3' sides of the lesion. The N-terminal half is responsible for the 3' incision and the C-terminal half is responsible for the 5' incision. This is UvrABC system protein C from Histophilus somni (strain 2336) (Haemophilus somnus).